Reading from the N-terminus, the 413-residue chain is tRNA (guanine-N(7)-)-methyltransferase non-catalytic subunit WDR4 (413 aa).

The residue at position 2 (Ala-2) is an N-acetylalanine. 5 WD repeats span residues 61-100, 102-141, 145-185, 188-228, and 289-329; these read TGSDSILASTFSKSGRYFALTDDSKRLILFRTKPWQCLSV, MVVRRCTALTFTASEDRVLVADKSGDVYSFSVLEPDGCGR, GHLS…IESF, GHTE…QLQC, and TFPH…WQAA. Residues 380 to 413 form a disordered region; the sequence is RLQQQLKKKRQRSPFPGSPEQTKKACPGQSALSC. Ser-392 and Ser-412 each carry phosphoserine.

It belongs to the WD repeat TRM82 family. As to quaternary structure, non-catalytic component of the METTL1-WDR4 complex, composed of METTL1 and WDR4. Interacts with FEN1; the interaction is direct.

It is found in the nucleus. The protein localises to the chromosome. It participates in tRNA modification; N(7)-methylguanine-tRNA biosynthesis. Functionally, non-catalytic component of the METTL1-WDR4 methyltransferase complex required for the formation of N(7)-methylguanine in a subset of RNA species, such as tRNAs, mRNAs and microRNAs (miRNAs). In the METTL1-WDR4 methyltransferase complex, WDR4 acts as a scaffold for tRNA-binding. Required for the formation of N(7)-methylguanine at position 46 (m7G46) in a large subset of tRNAs that contain the 5'-RAGGU-3' motif within the variable loop. M7G46 interacts with C13-G22 in the D-loop to stabilize tRNA tertiary structure and protect tRNAs from decay. Also required for the formation of N(7)-methylguanine at internal sites in a subset of mRNAs. Also required for methylation of a specific subset of miRNAs, such as let-7. Acts as a regulator of embryonic stem cell self-renewal and differentiation. Independently of METTL1, also plays a role in genome stability: localizes at the DNA replication site and regulates endonucleolytic activities of FEN1. The sequence is that of tRNA (guanine-N(7)-)-methyltransferase non-catalytic subunit WDR4 from Mus musculus (Mouse).